The chain runs to 239 residues: DNA repair protein RecO (239 aa).

It belongs to the RecO family.

Functionally, involved in DNA repair and RecF pathway recombination. This Bifidobacterium longum subsp. infantis (strain ATCC 15697 / DSM 20088 / JCM 1222 / NCTC 11817 / S12) protein is DNA repair protein RecO.